The primary structure comprises 246 residues: Acetoacetate decarboxylase (246 aa).

Lys-115 acts as the Schiff-base intermediate with acetoacetate in catalysis.

The protein belongs to the ADC family.

It catalyses the reaction acetoacetate + H(+) = acetone + CO2. In terms of biological role, catalyzes the conversion of acetoacetate to acetone and carbon dioxide. The protein is Acetoacetate decarboxylase of Clostridium beijerinckii (strain ATCC 51743 / NCIMB 8052) (Clostridium acetobutylicum).